Here is a 472-residue protein sequence, read N- to C-terminus: Eukaryotic translation initiation factor 2 subunit 3 (472 aa).

Ala-2 bears the N-acetylalanine mark. Ser-16 carries the post-translational modification Phosphoserine. Positions 39–248 constitute a tr-type G domain; that stretch reads QATINIGTIG…IVKKIPVPPR (210 aa). Positions 48-55 are G1; that stretch reads GHVAHGKS. Residue 51-56 participates in GTP binding; the sequence is AHGKST. The interval 76 to 80 is G2; it reads NITIK. The segment at 134–137 is G3; sequence DCPG. Residues 190-193 and 225-227 contribute to the GTP site; these read NKID and SAQ. Residues 190–193 form a G4 region; it reads NKID. The tract at residues 225–227 is G5; sequence SAQ. The segment at 457 to 469 is interacts with CDC123; sequence GQIRRGVTIKPTV.

The protein belongs to the TRAFAC class translation factor GTPase superfamily. Classic translation factor GTPase family. EIF2G subfamily. As to quaternary structure, eukaryotic translation initiation factor 2 eIF2 is a heterotrimeric complex composed of an alpha (EIF2S1), a beta (EIF2S2) and a gamma (EIF2S3) chain. eIF2 is member of the 43S pre-initiation complex (43S PIC). Interacts (via C-terminus) with CDC123; the interaction is direct.

The protein localises to the cytoplasm. The protein resides in the cytosol. It catalyses the reaction GTP + H2O = GDP + phosphate + H(+). Its function is as follows. Member of the eIF2 complex that functions in the early steps of protein synthesis by forming a ternary complex with GTP and initiator tRNA. This complex binds to a 40S ribosomal subunit, followed by mRNA binding to form the 43S pre-initiation complex (43S PIC). Junction of the 60S ribosomal subunit to form the 80S initiation complex is preceded by hydrolysis of the GTP bound to eIF2 and release of an eIF2-GDP binary complex. In order for eIF2 to recycle and catalyze another round of initiation, the GDP bound to eIF2 must exchange with GTP by way of a reaction catalyzed by eIF-2B. In Bos taurus (Bovine), this protein is Eukaryotic translation initiation factor 2 subunit 3 (EIF2S3).